The following is a 164-amino-acid chain: Putative anionic 4-hydroxy-benzoate permease (164 aa).

Residues 1–30 (CGRRRGSLAWPDASSPSANPRPGAGAAESS) are disordered. 3 consecutive transmembrane segments (helical) span residues 62–82 (LWVA…LMFM), 97–117 (GMAQ…VGGL), and 126–146 (PALT…MLAG).

It belongs to the major facilitator superfamily. Cyanate porter (TC 2.A.1.17) family.

The protein localises to the cell membrane. Its function is as follows. May be involved in uptake of anionic 4-hydroxy-benzoate. In Thauera aromatica, this protein is Putative anionic 4-hydroxy-benzoate permease.